The sequence spans 84 residues: MSILSFLLGEKKKTASVAKERLQIILAHERTASGAPADYLPALQRELVAVISKYVKIGNDDIKVNLERQDNLEVLEVKIEIPQA.

It belongs to the MinE family.

Its function is as follows. Prevents the cell division inhibition by proteins MinC and MinD at internal division sites while permitting inhibition at polar sites. This ensures cell division at the proper site by restricting the formation of a division septum at the midpoint of the long axis of the cell. This Ralstonia pickettii (strain 12J) protein is Cell division topological specificity factor.